A 477-amino-acid chain; its full sequence is UDP-N-acetylmuramate--L-alanine ligase (477 aa).

122 to 128 (GTHGKTT) is an ATP binding site.

It belongs to the MurCDEF family.

Its subcellular location is the cytoplasm. It catalyses the reaction UDP-N-acetyl-alpha-D-muramate + L-alanine + ATP = UDP-N-acetyl-alpha-D-muramoyl-L-alanine + ADP + phosphate + H(+). It participates in cell wall biogenesis; peptidoglycan biosynthesis. Cell wall formation. The protein is UDP-N-acetylmuramate--L-alanine ligase of Xylella fastidiosa (strain M23).